A 577-amino-acid chain; its full sequence is CTP synthase (577 aa).

Residues 1 to 268 form an amidoligase domain region; sequence MDPAFIFITG…GALLCERLRL (268 aa). S14 serves as a coordination point for CTP. Residue S14 participates in UTP binding. 15-20 contacts ATP; sequence SLGKGI. An L-glutamine-binding site is contributed by Y55. D72 contributes to the ATP binding site. Positions 72 and 142 each coordinate Mg(2+). CTP-binding positions include 149–151, 189–194, and K225; these read DIE and KTKPLQ. Residues 189–194 and K225 contribute to the UTP site; that span reads KTKPLQ. A Glutamine amidotransferase type-1 domain is found at 333–575; the sequence is TVALVGKYVS…VAAGLERKDS (243 aa). G396 serves as a coordination point for L-glutamine. The active-site Nucleophile; for glutamine hydrolysis is the C423. L-glutamine contacts are provided by residues 424–427, E447, and R503; that span reads LGMQ. Residues H548 and E550 contribute to the active site.

Belongs to the CTP synthase family. As to quaternary structure, homotetramer.

It carries out the reaction UTP + L-glutamine + ATP + H2O = CTP + L-glutamate + ADP + phosphate + 2 H(+). It catalyses the reaction L-glutamine + H2O = L-glutamate + NH4(+). The enzyme catalyses UTP + NH4(+) + ATP = CTP + ADP + phosphate + 2 H(+). Its pathway is pyrimidine metabolism; CTP biosynthesis via de novo pathway; CTP from UDP: step 2/2. Its activity is regulated as follows. Allosterically activated by GTP, when glutamine is the substrate; GTP has no effect on the reaction when ammonia is the substrate. The allosteric effector GTP functions by stabilizing the protein conformation that binds the tetrahedral intermediate(s) formed during glutamine hydrolysis. Inhibited by the product CTP, via allosteric rather than competitive inhibition. In terms of biological role, catalyzes the ATP-dependent amination of UTP to CTP with either L-glutamine or ammonia as the source of nitrogen. Regulates intracellular CTP levels through interactions with the four ribonucleotide triphosphates. This chain is CTP synthase, found in Treponema pallidum (strain Nichols).